The sequence spans 724 residues: Probable metal-nicotianamine transporter YSL13 (724 aa).

Positions 1–54 are disordered; it reads MATVPTPSEAHGGATPTAADVEMVEASELRRRGKPSGDRATGPSRDGAAAAAEE. The next 14 helical transmembrane spans lie at 80-100, 103-123, 148-168, 190-210, 252-272, 310-330, 355-375, 423-443, 455-475, 487-507, 541-561, 603-623, 640-660, and 675-695; these read AFVV…KLNL, GIIP…VRLW, CVVA…ILSM, LGWI…GLVP, LGIF…YTAT, IVNV…WPLI, VFIA…KMII, IPWY…IGTV, ILVA…GTGL, LAIF…LAGL, FVSQ…VFWL, LNLC…RDLV, FYIG…LFVW, and VASG…VLAL.

It belongs to the YSL (TC 2.A.67.2) family. As to expression, expressed in leaves and at low levels in root cortex.

Its subcellular location is the membrane. Functionally, may be involved in the transport of nicotianamine-chelated metals. The polypeptide is Probable metal-nicotianamine transporter YSL13 (YSL13) (Oryza sativa subsp. japonica (Rice)).